A 180-amino-acid polypeptide reads, in one-letter code: Hypoxanthine-guanine phosphoribosyltransferase (180 aa).

Residues K43 and G44 each coordinate diphosphate. Residues E99 and D100 each contribute to the Mg(2+) site. D103 functions as the Proton acceptor in the catalytic mechanism. GMP is bound by residues K131, 152–153, and D159; that span reads FI. Position 165 (R165) interacts with diphosphate.

This sequence belongs to the purine/pyrimidine phosphoribosyltransferase family. The cofactor is Mg(2+).

The protein localises to the cytoplasm. It catalyses the reaction IMP + diphosphate = hypoxanthine + 5-phospho-alpha-D-ribose 1-diphosphate. It carries out the reaction GMP + diphosphate = guanine + 5-phospho-alpha-D-ribose 1-diphosphate. The protein operates within purine metabolism; IMP biosynthesis via salvage pathway; IMP from hypoxanthine: step 1/1. Its pathway is purine metabolism; GMP biosynthesis via salvage pathway; GMP from guanine: step 1/1. In terms of biological role, purine salvage pathway enzyme that catalyzes the transfer of the ribosyl-5-phosphate group from 5-phospho-alpha-D-ribose 1-diphosphate (PRPP) to the N9 position of the 6-oxopurines hypoxanthine and guanine to form the corresponding ribonucleotides IMP (inosine 5'-monophosphate) and GMP (guanosine 5'-monophosphate), with the release of PPi. This chain is Hypoxanthine-guanine phosphoribosyltransferase (hpt), found in Streptococcus mutans serotype c (strain ATCC 700610 / UA159).